We begin with the raw amino-acid sequence, 763 residues long: Protein translocase subunit SecA 2 (763 aa).

Residues glutamine 83, 101–105 (GEGKT), and aspartate 490 contribute to the ATP site.

It belongs to the SecA family. Monomer and homodimer. Part of the essential Sec protein translocation apparatus which comprises SecA, SecYEG and auxiliary proteins SecDF. Other proteins may also be involved.

It localises to the cell membrane. The protein resides in the cytoplasm. The catalysed reaction is ATP + H2O + cellular proteinSide 1 = ADP + phosphate + cellular proteinSide 2.. In terms of biological role, part of the Sec protein translocase complex. Interacts with the SecYEG preprotein conducting channel. Has a central role in coupling the hydrolysis of ATP to the transfer of proteins into and across the cell membrane, serving as an ATP-driven molecular motor driving the stepwise translocation of polypeptide chains across the membrane. In Corynebacterium glutamicum (strain ATCC 13032 / DSM 20300 / JCM 1318 / BCRC 11384 / CCUG 27702 / LMG 3730 / NBRC 12168 / NCIMB 10025 / NRRL B-2784 / 534), this protein is Protein translocase subunit SecA 2.